Reading from the N-terminus, the 208-residue chain is Protein-L-isoaspartate O-methyltransferase (208 aa).

Serine 59 is a catalytic residue.

Belongs to the methyltransferase superfamily. L-isoaspartyl/D-aspartyl protein methyltransferase family.

Its subcellular location is the cytoplasm. The catalysed reaction is [protein]-L-isoaspartate + S-adenosyl-L-methionine = [protein]-L-isoaspartate alpha-methyl ester + S-adenosyl-L-homocysteine. In terms of biological role, catalyzes the methyl esterification of L-isoaspartyl residues in peptides and proteins that result from spontaneous decomposition of normal L-aspartyl and L-asparaginyl residues. It plays a role in the repair and/or degradation of damaged proteins. This Proteus mirabilis (strain HI4320) protein is Protein-L-isoaspartate O-methyltransferase.